The primary structure comprises 561 residues: Embryonal Fyn-associated substrate (561 aa).

Residues 5-68 (TSTQLARALY…PANRVKLLPA (64 aa)) form the SH3 domain. Disordered regions lie at residues 68 to 123 (AGPA…CPPS), 171 to 215 (HPLT…PGPP), 240 to 372 (LADG…HNEY), and 390 to 422 (DKAQ…ALSP). The span at 103-123 (VPPPARPCPTSGPPAGPCPPS) shows a compositional bias: pro residues. Y253 bears the Phosphotyrosine; by SRC mark. 2 consecutive short sequence motifs (SH3-binding) follow at residues 305–311 (RPLPALP) and 335–341 (RPLPPPP). The segment covering 308–325 (PALPVPEAPSPSPVPSPA) has biased composition (pro residues). Positions 352 to 372 (VEGDPEGREMEDDPAGHHNEY) are enriched in basic and acidic residues. Residues 438-488 (FYAGQCQSHYSALQAAVAALMSSTQANQPPRLFVPHSKRVVVAAHRLVFVG) are divergent helix-loop-helix motif.

This sequence belongs to the CAS family. In terms of processing, phosphorylated on multiple tyrosine residues. Phosphorylated on tyrosines by FYN and SRC. The protein has been detected in lung and placenta.

Its function is as follows. Docking protein which plays a central coordinating role for tyrosine-kinase-based signaling related to cell adhesion. May serve as an activator of SRC and a downstream effector. Interacts with the SH3 domain of FYN and with CRK, SRC, and YES. This is Embryonal Fyn-associated substrate (EFS) from Homo sapiens (Human).